Reading from the N-terminus, the 878-residue chain is Alanine--tRNA ligase (878 aa).

H567, H571, C669, and H673 together coordinate Zn(2+).

It belongs to the class-II aminoacyl-tRNA synthetase family. The cofactor is Zn(2+).

The protein localises to the cytoplasm. The catalysed reaction is tRNA(Ala) + L-alanine + ATP = L-alanyl-tRNA(Ala) + AMP + diphosphate. Catalyzes the attachment of alanine to tRNA(Ala) in a two-step reaction: alanine is first activated by ATP to form Ala-AMP and then transferred to the acceptor end of tRNA(Ala). Also edits incorrectly charged Ser-tRNA(Ala) and Gly-tRNA(Ala) via its editing domain. This Rickettsia felis (strain ATCC VR-1525 / URRWXCal2) (Rickettsia azadi) protein is Alanine--tRNA ligase.